The following is a 381-amino-acid chain: 1-deoxy-D-xylulose 5-phosphate reductoisomerase (381 aa).

5 residues coordinate NADPH: Thr10, Gly11, Ser12, Ile13, and Asn120. Lys121 contacts 1-deoxy-D-xylulose 5-phosphate. NADPH is bound at residue Glu122. A Mn(2+)-binding site is contributed by Asp146. 1-deoxy-D-xylulose 5-phosphate-binding residues include Ser147, Glu148, Ser172, and His195. Glu148 is a binding site for Mn(2+). Residue Gly201 coordinates NADPH. 1-deoxy-D-xylulose 5-phosphate is bound by residues Ser208, Asn213, Lys214, and Glu217. Residue Glu217 participates in Mn(2+) binding.

The protein belongs to the DXR family. The cofactor is Mg(2+). Mn(2+) serves as cofactor.

The catalysed reaction is 2-C-methyl-D-erythritol 4-phosphate + NADP(+) = 1-deoxy-D-xylulose 5-phosphate + NADPH + H(+). It functions in the pathway isoprenoid biosynthesis; isopentenyl diphosphate biosynthesis via DXP pathway; isopentenyl diphosphate from 1-deoxy-D-xylulose 5-phosphate: step 1/6. Its function is as follows. Catalyzes the NADPH-dependent rearrangement and reduction of 1-deoxy-D-xylulose-5-phosphate (DXP) to 2-C-methyl-D-erythritol 4-phosphate (MEP). This chain is 1-deoxy-D-xylulose 5-phosphate reductoisomerase, found in Thermodesulfovibrio yellowstonii (strain ATCC 51303 / DSM 11347 / YP87).